Consider the following 150-residue polypeptide: MTFLKYLLILCTIFLMVTNSLSEEIDKEFNIKPEGNLDTVELVLENYKCIFSFAATGGTNENWKIFLTTENGVATCFIGRPKPISYLFFKQFSAQLINTKTGKSNIIPEISDNSGIMPLGDQYILTSDNKVVQSNNFAGNLAFLVLNSDK.

Positions 1–22 (MTFLKYLLILCTIFLMVTNSLS) are cleaved as a signal peptide.

The protein belongs to the MYDGF family.

It localises to the secreted. The sequence is that of Myeloid-derived growth factor homolog from Dictyostelium discoideum (Social amoeba).